Consider the following 225-residue polypeptide: Histone-arginine methyltransferase METTL23 (225 aa).

This sequence belongs to the methyltransferase superfamily. METTL23 family. As to quaternary structure, interacts with HSPA5, HSP90B1, TUBULIN, UGGT1 and UGGT2. Interacts with TET3. Interacts with STPG4.

The protein localises to the nucleus. It localises to the cytoplasm. The catalysed reaction is L-arginyl-[protein] + 2 S-adenosyl-L-methionine = N(omega),N(omega)-dimethyl-L-arginyl-[protein] + 2 S-adenosyl-L-homocysteine + 2 H(+). In terms of biological role, histone methyltransferase that dimethylates histone H3 at 'Arg-17', forming asymmetric dimethylarginine (H3R17me2a), leading to activate transcription via chromatin remodeling. Maternal factor involved in epigenetic chromatin reprogramming of the paternal genome in the zygote: mediates H3R17me2a, promoting histone H3.3 incorporation in the male pronucleus, leading to TET3 recruitment and subsequent DNA demethylation. This chain is Histone-arginine methyltransferase METTL23, found in Rattus norvegicus (Rat).